Reading from the N-terminus, the 449-residue chain is Tubulin alpha-1C chain (449 aa).

The MREC motif signature appears at 1–4; it reads MREC. GTP is bound at residue glutamine 11. An N6-acetyllysine modification is found at lysine 40. 7 residues coordinate GTP: glutamate 71, serine 140, glycine 144, threonine 145, threonine 179, asparagine 206, and asparagine 228. Glutamate 71 is a binding site for Mg(2+). The active site involves glutamate 254. Tyrosine 282 bears the 3'-nitrotyrosine mark. Residues 429–449 form a disordered region; the sequence is EKDYEEVGADSADGEDEGEEY. Residues 431–449 show a composition bias toward acidic residues; that stretch reads DYEEVGADSADGEDEGEEY. Residue tyrosine 432 is modified to Phosphotyrosine. The residue at position 439 (serine 439) is a Phosphoserine. Tyrosine 449 carries the 3'-nitrotyrosine modification.

This sequence belongs to the tubulin family. In terms of assembly, dimer of alpha and beta chains. A typical microtubule is a hollow water-filled tube with an outer diameter of 25 nm and an inner diameter of 15 nM. Alpha-beta heterodimers associate head-to-tail to form protofilaments running lengthwise along the microtubule wall with the beta-tubulin subunit facing the microtubule plus end conferring a structural polarity. Microtubules usually have 13 protofilaments but different protofilament numbers can be found in some organisms and specialized cells. Requires Mg(2+) as cofactor. Some glutamate residues at the C-terminus are polyglutamylated, resulting in polyglutamate chains on the gamma-carboxyl group. Polyglutamylation plays a key role in microtubule severing by spastin (SPAST). SPAST preferentially recognizes and acts on microtubules decorated with short polyglutamate tails: severing activity by SPAST increases as the number of glutamates per tubulin rises from one to eight, but decreases beyond this glutamylation threshold. Glutamylation is also involved in cilia motility. Post-translationally, some glutamate residues at the C-terminus are monoglycylated but not polyglycylated due to the absence of functional TTLL10 in human. Monoglycylation is mainly limited to tubulin incorporated into cilia and flagella axonemes, which is required for their stability and maintenance. Flagella glycylation controls sperm motility. Both polyglutamylation and monoglycylation can coexist on the same protein on adjacent residues, and lowering glycylation levels increases polyglutamylation, and reciprocally. In terms of processing, acetylation of alpha chains at Lys-40 is located inside the microtubule lumen. This modification has been correlated with increased microtubule stability, intracellular transport and ciliary assembly. Methylation of alpha chains at Lys-40 is found in mitotic microtubules and is required for normal mitosis and cytokinesis contributing to genomic stability. Post-translationally, nitration of Tyr-449 is irreversible and interferes with normal dynein intracellular distribution. In terms of processing, undergoes a tyrosination/detyrosination cycle, the cyclic removal and re-addition of a C-terminal tyrosine residue by the enzymes tubulin tyrosine carboxypeptidase (MATCAP1/KIAA0895L, VASH1 or VASH2) and tubulin tyrosine ligase (TTL), respectively. Tyrosination promotes microtubule interaction with CAP-Gly domain-containing proteins such as CLIP1, CLIP2 and DCTN1. Tyrosination regulates the initiation of dynein-dynactin motility via interaction with DCTN1, which brings the dynein-dynactin complex into contact with microtubules. In neurons, tyrosinated tubulins mediate the initiation of retrograde vesicle transport. Post-translationally, detyrosination is involved in metaphase plate congression by guiding chromosomes during mitosis: detyrosination promotes interaction with CENPE, promoting pole-proximal transport of chromosomes toward the equator. Detyrosination increases microtubules-dependent mechanotransduction in dystrophic cardiac and skeletal muscle. In cardiomyocytes, detyrosinated microtubules are required to resist to contractile compression during contraction: detyrosination promotes association with desmin (DES) at force-generating sarcomeres, leading to buckled microtubules and mechanical resistance to contraction.

Its subcellular location is the cytoplasm. It is found in the cytoskeleton. The enzyme catalyses GTP + H2O = GDP + phosphate + H(+). Functionally, tubulin is the major constituent of microtubules, a cylinder consisting of laterally associated linear protofilaments composed of alpha- and beta-tubulin heterodimers. Microtubules grow by the addition of GTP-tubulin dimers to the microtubule end, where a stabilizing cap forms. Below the cap, tubulin dimers are in GDP-bound state, owing to GTPase activity of alpha-tubulin. This is Tubulin alpha-1C chain (TUBA1C) from Homo sapiens (Human).